The sequence spans 304 residues: Rhodopsin (304 aa).

The Extracellular segment spans residues 1 to 13 (YEYPQYYLVNPAA). The chain crosses the membrane as a helical span at residues 14 to 38 (YAALGAYMFLLILVGFPINFLTLYV). Residues 39–50 (TIEHKKLRTPLN) lie on the Cytoplasmic side of the membrane. A helical membrane pass occupies residues 51 to 73 (YILLNLAVANLFMVFGGFTTTMF). At 74-87 (TSIRGYFVLGHLGC) the chain is on the extracellular side. The cysteines at positions 87 and 164 are disulfide-linked. The chain crosses the membrane as a helical span at residues 88 to 110 (NLEGFFATLSGEIALWSLVVLAI). The 'Ionic lock' involved in activated form stabilization motif lies at 111–113 (ERW). The Cytoplasmic segment spans residues 111–129 (ERWVVVCKPISNFRFGENH). A helical transmembrane segment spans residues 130–150 (AIMGLAFTWTMAMACAAPPLV). The Extracellular portion of the chain corresponds to 151–179 (GWSRYIPEGMQCSCGIDYYTRAEGFNNES). The N-linked (GlcNAc...) asparagine glycan is linked to Asn177. A helical membrane pass occupies residues 180-201 (FVVYMFTCHFMTPLTIVFFCYG). The Cytoplasmic segment spans residues 202–229 (RLLCAVKEAAAAQQESETTQRAEREVTR). The helical transmembrane segment at 230–251 (MVVIMVIAFLICWCPYAGVAWF) threads the bilayer. The Extracellular portion of the chain corresponds to 252 to 263 (IFTHQGSEFGPV). A helical transmembrane segment spans residues 264-285 (FMTIPAFFAKSSSIYNPMIYIC). Lys273 carries the post-translational modification N6-(retinylidene)lysine. Residues 286–304 (LNKQFRHCMITTLCCGKKA) are Cytoplasmic-facing. S-palmitoyl cysteine attachment occurs at residues Cys299 and Cys300.

This sequence belongs to the G-protein coupled receptor 1 family. Opsin subfamily. Phosphorylated on some or all of the serine and threonine residues present in the C-terminal region. In terms of processing, contains one covalently linked retinal chromophore.

It localises to the membrane. It is found in the cell projection. The protein localises to the cilium. Its subcellular location is the photoreceptor outer segment. In terms of biological role, photoreceptor required for image-forming vision at low light intensity. While most salt water fish species use retinal as chromophore, most freshwater fish use 3-dehydroretinal, or a mixture of retinal and 3-dehydroretinal. Light-induced isomerization of 11-cis to all-trans retinal triggers a conformational change that activates signaling via G-proteins. Subsequent receptor phosphorylation mediates displacement of the bound G-protein alpha subunit by arrestin and terminates signaling. In Ictalurus punctatus (Channel catfish), this protein is Rhodopsin (rho).